The chain runs to 442 residues: UDP-N-acetylmuramoylalanine--D-glutamate ligase (442 aa).

109 to 115 (GSNGKTT) provides a ligand contact to ATP.

Belongs to the MurCDEF family.

The protein localises to the cytoplasm. The enzyme catalyses UDP-N-acetyl-alpha-D-muramoyl-L-alanine + D-glutamate + ATP = UDP-N-acetyl-alpha-D-muramoyl-L-alanyl-D-glutamate + ADP + phosphate + H(+). The protein operates within cell wall biogenesis; peptidoglycan biosynthesis. Its function is as follows. Cell wall formation. Catalyzes the addition of glutamate to the nucleotide precursor UDP-N-acetylmuramoyl-L-alanine (UMA). This Solibacter usitatus (strain Ellin6076) protein is UDP-N-acetylmuramoylalanine--D-glutamate ligase.